Reading from the N-terminus, the 967-residue chain is Isoleucine--tRNA ligase 2 (967 aa).

Residues 58–68 (PYANGDIHIGH) carry the 'HIGH' region motif. Residues 437 to 446 (AVTEEAGATG) show a composition bias toward low complexity. The segment at 437 to 466 (AVTEEAGATGEARKVGKAEEAEEAGPAKTL) is disordered. Position 598 (E598) interacts with L-isoleucyl-5'-AMP. A 'KMSKS' region motif is present at residues 639 to 643 (KMSKS). K642 lines the ATP pocket. Residues C922, C925, C942, and C945 each coordinate Zn(2+).

It belongs to the class-I aminoacyl-tRNA synthetase family. IleS type 1 subfamily. In terms of assembly, monomer. Requires Zn(2+) as cofactor.

The protein resides in the cytoplasm. It carries out the reaction tRNA(Ile) + L-isoleucine + ATP = L-isoleucyl-tRNA(Ile) + AMP + diphosphate. Catalyzes the attachment of isoleucine to tRNA(Ile). As IleRS can inadvertently accommodate and process structurally similar amino acids such as valine, to avoid such errors it has two additional distinct tRNA(Ile)-dependent editing activities. One activity is designated as 'pretransfer' editing and involves the hydrolysis of activated Val-AMP. The other activity is designated 'posttransfer' editing and involves deacylation of mischarged Val-tRNA(Ile). This chain is Isoleucine--tRNA ligase 2, found in Burkholderia mallei (strain ATCC 23344).